Reading from the N-terminus, the 200-residue chain is Dephospho-CoA kinase (200 aa).

In terms of domain architecture, DPCK spans valine 4–aspartate 200. Alanine 12 to threonine 17 is an ATP binding site.

It belongs to the CoaE family.

The protein localises to the cytoplasm. It carries out the reaction 3'-dephospho-CoA + ATP = ADP + CoA + H(+). The protein operates within cofactor biosynthesis; coenzyme A biosynthesis; CoA from (R)-pantothenate: step 5/5. Its function is as follows. Catalyzes the phosphorylation of the 3'-hydroxyl group of dephosphocoenzyme A to form coenzyme A. The chain is Dephospho-CoA kinase from Bacillus cereus (strain ATCC 10987 / NRS 248).